The chain runs to 490 residues: ATP synthase subunit beta (490 aa).

175-182 (GGAGVGKT) is an ATP binding site.

The protein belongs to the ATPase alpha/beta chains family. F-type ATPases have 2 components, CF(1) - the catalytic core - and CF(0) - the membrane proton channel. CF(1) has five subunits: alpha(3), beta(3), gamma(1), delta(1), epsilon(1). CF(0) has three main subunits: a(1), b(2) and c(9-12). The alpha and beta chains form an alternating ring which encloses part of the gamma chain. CF(1) is attached to CF(0) by a central stalk formed by the gamma and epsilon chains, while a peripheral stalk is formed by the delta and b chains.

Its subcellular location is the cell membrane. It catalyses the reaction ATP + H2O + 4 H(+)(in) = ADP + phosphate + 5 H(+)(out). In terms of biological role, produces ATP from ADP in the presence of a proton gradient across the membrane. The catalytic sites are hosted primarily by the beta subunits. The chain is ATP synthase subunit beta from Acidothermus cellulolyticus (strain ATCC 43068 / DSM 8971 / 11B).